The primary structure comprises 108 residues: Large ribosomal subunit protein uL24 (108 aa).

Belongs to the universal ribosomal protein uL24 family. As to quaternary structure, part of the 50S ribosomal subunit.

In terms of biological role, one of two assembly initiator proteins, it binds directly to the 5'-end of the 23S rRNA, where it nucleates assembly of the 50S subunit. Its function is as follows. One of the proteins that surrounds the polypeptide exit tunnel on the outside of the subunit. This chain is Large ribosomal subunit protein uL24, found in Desulfosudis oleivorans (strain DSM 6200 / JCM 39069 / Hxd3) (Desulfococcus oleovorans).